The sequence spans 340 residues: Flavonoid 7-O-methyltransferase 2 (340 aa).

Position 207 (aspartate 207) interacts with S-adenosyl-L-methionine. Catalysis depends on histidine 245, which acts as the Proton acceptor.

Belongs to the class I-like SAM-binding methyltransferase superfamily. Cation-independent O-methyltransferase family. Homodimer. As to expression, expressed in leaves.

It catalyses the reaction scutellarein 4'-methyl ether + S-adenosyl-L-methionine = ladanein + S-adenosyl-L-homocysteine. The catalysed reaction is acacetin + S-adenosyl-L-methionine = apigenin 4',7-dimethyl ether + S-adenosyl-L-homocysteine. The enzyme catalyses diosmetin + S-adenosyl-L-methionine = luteolin 4',7-dimethyl ether + S-adenosyl-L-homocysteine. It carries out the reaction chrysoeriol + S-adenosyl-L-methionine = velutin + S-adenosyl-L-homocysteine. It catalyses the reaction (2S)-naringenin + S-adenosyl-L-methionine = (2S)-sakuranetin + S-adenosyl-L-homocysteine + H(+). The catalysed reaction is apigenin + S-adenosyl-L-methionine = genkwanin + S-adenosyl-L-homocysteine + H(+). The enzyme catalyses luteolin + S-adenosyl-L-methionine = luteolin 7-methyl ether + S-adenosyl-L-homocysteine + H(+). It carries out the reaction scutellarein + S-adenosyl-L-methionine = scutellarein 7-methyl ether + S-adenosyl-L-homocysteine. The protein operates within flavonoid metabolism. In terms of biological role, flavonoid 7-O-methyltransferase involved in the biosynthesis of polymethoxylated flavonoids natural products such as nevadensin and salvigenin, aroma compounds which contribute to the flavor of sweet basil, and exhibit pharmacological activities such as anti-allergic, anti-oxidant, antibacterial, anti-proliferative, and anti-inflammatory effects. Catalyzes S-adenosylmethionine-dependent regioselective 7-O-methylation of flavonoids; active on various hydroxylated flavonoid substrates, including apigenin (API) and luteolin (LUT), and, with a lower efficiency, scutellarein (SCU), naringenin (NAR), chrysoeriol (CHRYS), diosmetin (DIOS), acacetin (ACA) and scutellarein-7-methyl ether (SCU7Me). This Ocimum basilicum (Sweet basil) protein is Flavonoid 7-O-methyltransferase 2.